The following is a 276-amino-acid chain: Small ribosomal subunit protein uS5w (276 aa).

Residues 1 to 15 (MAERGVERGGDRGDF) show a composition bias toward basic and acidic residues. Residues 1–42 (MAERGVERGGDRGDFGRGFGGRGGGRGGPRGRGRRAGRAPEE) form a disordered region. Residues 16 to 28 (GRGFGGRGGGRGG) show a composition bias toward gly residues. In terms of domain architecture, S5 DRBM spans 87 to 150 (LKDEVMKIMP…ILAKLSVVPI (64 aa)).

It belongs to the universal ribosomal protein uS5 family.

The sequence is that of Small ribosomal subunit protein uS5w (RPS2D) from Arabidopsis thaliana (Mouse-ear cress).